A 217-amino-acid chain; its full sequence is MIRNLIFLGAPGSGKGSTALEISTKYDIEHISTGEIFRNEIKNKTPLGLKVAEIVNDGKYVPDELTNQIVLKKLKELKQENKKFILDGYPRTLNQAMFLSSVLDEKILAVLLEVPTNLIIERLSFRRICPICKSIYHLKYNPSKKGEFCENHLENLTKIEARQDDSEESIKKRLKIYNEETKPMIDYYKKNQSLVVINSEESVKKVASLVIKKVFND.

An ATP-binding site is contributed by 12–17 (GSGKGS). The interval 32 to 61 (STGEIFRNEIKNKTPLGLKVAEIVNDGKYV) is NMP. AMP contacts are provided by residues Thr33, Arg38, 59 to 61 (KYV), 88 to 91 (GYPR), and Gln95. The interval 125 to 165 (FRRICPICKSIYHLKYNPSKKGEFCENHLENLTKIEARQDD) is LID. ATP is bound by residues Arg126 and 135–136 (IY). The AMP site is built by Arg162 and Arg173. Glu201 lines the ATP pocket.

It belongs to the adenylate kinase family. As to quaternary structure, monomer.

It localises to the cytoplasm. It catalyses the reaction AMP + ATP = 2 ADP. It participates in purine metabolism; AMP biosynthesis via salvage pathway; AMP from ADP: step 1/1. Functionally, catalyzes the reversible transfer of the terminal phosphate group between ATP and AMP. Plays an important role in cellular energy homeostasis and in adenine nucleotide metabolism. The protein is Adenylate kinase of Mycoplasma mobile (strain ATCC 43663 / 163K / NCTC 11711) (Mesomycoplasma mobile).